The chain runs to 521 residues: Bifunctional purine biosynthesis protein PurH (521 aa).

The MGS-like domain occupies 1–145 (MIKQALISVS…KNHKDVIVIC (145 aa)).

The protein belongs to the PurH family.

The catalysed reaction is (6R)-10-formyltetrahydrofolate + 5-amino-1-(5-phospho-beta-D-ribosyl)imidazole-4-carboxamide = 5-formamido-1-(5-phospho-D-ribosyl)imidazole-4-carboxamide + (6S)-5,6,7,8-tetrahydrofolate. It carries out the reaction IMP + H2O = 5-formamido-1-(5-phospho-D-ribosyl)imidazole-4-carboxamide. It participates in purine metabolism; IMP biosynthesis via de novo pathway; 5-formamido-1-(5-phospho-D-ribosyl)imidazole-4-carboxamide from 5-amino-1-(5-phospho-D-ribosyl)imidazole-4-carboxamide (10-formyl THF route): step 1/1. Its pathway is purine metabolism; IMP biosynthesis via de novo pathway; IMP from 5-formamido-1-(5-phospho-D-ribosyl)imidazole-4-carboxamide: step 1/1. This Herminiimonas arsenicoxydans protein is Bifunctional purine biosynthesis protein PurH.